Consider the following 444-residue polypeptide: Na(+)/H(+) antiporter NhaA 2 (444 aa).

The next 11 helical transmembrane spans lie at 21 to 41 (FSGI…NSPF), 64 to 84 (FSIH…MVGL), 102 to 122 (AFPV…YYVL), 131 to 151 (GFGI…LLLG), 160 to 180 (VFLV…IAVF), 185 to 205 (EGLH…LTGI), 212 to 232 (HLGV…HSGI), 307 to 327 (ALQP…NAGV), 342 to 362 (LGVI…LTFL), 377 to 397 (WSHI…SMFV), and 413 to 433 (IAIL…LIIN).

This sequence belongs to the NhaA Na(+)/H(+) (TC 2.A.33) antiporter family.

It is found in the cell inner membrane. The enzyme catalyses Na(+)(in) + 2 H(+)(out) = Na(+)(out) + 2 H(+)(in). Na(+)/H(+) antiporter that extrudes sodium in exchange for external protons. This chain is Na(+)/H(+) antiporter NhaA 2, found in Helicobacter hepaticus (strain ATCC 51449 / 3B1).